Consider the following 239-residue polypeptide: Geranylgeranylglyceryl phosphate synthase (239 aa).

Residues Asp-19 and Ser-48 each contribute to the Mg(2+) site. Sn-glycerol 1-phosphate contacts are provided by residues Tyr-167–Gly-173, Gly-197–Gly-198, and Gly-219–Thr-220.

This sequence belongs to the GGGP/HepGP synthase family. Group II subfamily. It depends on Mg(2+) as a cofactor.

It is found in the cytoplasm. It carries out the reaction sn-glycerol 1-phosphate + (2E,6E,10E)-geranylgeranyl diphosphate = sn-3-O-(geranylgeranyl)glycerol 1-phosphate + diphosphate. It functions in the pathway membrane lipid metabolism; glycerophospholipid metabolism. Prenyltransferase that catalyzes the transfer of the geranylgeranyl moiety of geranylgeranyl diphosphate (GGPP) to the C3 hydroxyl of sn-glycerol-1-phosphate (G1P). This reaction is the first ether-bond-formation step in the biosynthesis of archaeal membrane lipids. The protein is Geranylgeranylglyceryl phosphate synthase of Methanopyrus kandleri (strain AV19 / DSM 6324 / JCM 9639 / NBRC 100938).